The chain runs to 212 residues: Golgi SNAP receptor complex member 2 homolog memb-1 (212 aa).

Over 1–189 the chain is Cytoplasmic; it reads MEAQYQSTNF…QVIDRRVRED (189 aa). Residues 190-210 form a helical; Anchor for type IV membrane protein membrane-spanning segment; it reads WIFVIGCIVCCIFMYAFYRFW. Over 211 to 212 the chain is Vesicular; sequence RG.

This sequence belongs to the GOSR2 family. In terms of assembly, part of a unique SNARE complex.

The protein localises to the golgi apparatus. It is found in the cis-Golgi network membrane. The protein resides in the golgi apparatus membrane. It localises to the endoplasmic reticulum membrane. Its function is as follows. Involved in transport of proteins from the cis/medial-Golgi to the trans-Golgi network. The protein is Golgi SNAP receptor complex member 2 homolog memb-1 of Caenorhabditis briggsae.